Consider the following 305-residue polypeptide: Glutaminase (305 aa).

Positions 61, 113, 158, 165, 189, 241, and 259 each coordinate substrate.

Belongs to the glutaminase family. Homotetramer.

The catalysed reaction is L-glutamine + H2O = L-glutamate + NH4(+). This Alkaliphilus metalliredigens (strain QYMF) protein is Glutaminase.